The primary structure comprises 474 residues: ATP synthase subunit beta (474 aa).

Position 152–159 (152–159) interacts with ATP; it reads GGAGVGKT.

Belongs to the ATPase alpha/beta chains family. As to quaternary structure, F-type ATPases have 2 components, CF(1) - the catalytic core - and CF(0) - the membrane proton channel. CF(1) has five subunits: alpha(3), beta(3), gamma(1), delta(1), epsilon(1). CF(0) has three main subunits: a(1), b(2) and c(9-12). The alpha and beta chains form an alternating ring which encloses part of the gamma chain. CF(1) is attached to CF(0) by a central stalk formed by the gamma and epsilon chains, while a peripheral stalk is formed by the delta and b chains.

The protein resides in the cell inner membrane. The enzyme catalyses ATP + H2O + 4 H(+)(in) = ADP + phosphate + 5 H(+)(out). Produces ATP from ADP in the presence of a proton gradient across the membrane. The catalytic sites are hosted primarily by the beta subunits. The polypeptide is ATP synthase subunit beta (Paramagnetospirillum magneticum (strain ATCC 700264 / AMB-1) (Magnetospirillum magneticum)).